Here is a 157-residue protein sequence, read N- to C-terminus: Ribosome-binding factor A (157 aa).

The segment at 124–157 (SAGAQFAGDADPYRKPESDDESDTAAKTDGDAAE) is disordered. The segment covering 147–157 (TAAKTDGDAAE) has biased composition (basic and acidic residues).

This sequence belongs to the RbfA family. As to quaternary structure, monomer. Binds 30S ribosomal subunits, but not 50S ribosomal subunits or 70S ribosomes.

It is found in the cytoplasm. One of several proteins that assist in the late maturation steps of the functional core of the 30S ribosomal subunit. Associates with free 30S ribosomal subunits (but not with 30S subunits that are part of 70S ribosomes or polysomes). Required for efficient processing of 16S rRNA. May interact with the 5'-terminal helix region of 16S rRNA. In Streptomyces avermitilis (strain ATCC 31267 / DSM 46492 / JCM 5070 / NBRC 14893 / NCIMB 12804 / NRRL 8165 / MA-4680), this protein is Ribosome-binding factor A.